The primary structure comprises 478 residues: Glycogen synthase (478 aa).

Lys-15 is a binding site for ADP-alpha-D-glucose.

This sequence belongs to the glycosyltransferase 1 family. Bacterial/plant glycogen synthase subfamily.

It catalyses the reaction [(1-&gt;4)-alpha-D-glucosyl](n) + ADP-alpha-D-glucose = [(1-&gt;4)-alpha-D-glucosyl](n+1) + ADP + H(+). The protein operates within glycan biosynthesis; glycogen biosynthesis. In terms of biological role, synthesizes alpha-1,4-glucan chains using ADP-glucose. The sequence is that of Glycogen synthase from Streptococcus uberis (strain ATCC BAA-854 / 0140J).